Here is a 231-residue protein sequence, read N- to C-terminus: uncharacterized protein (231 aa).

This is an uncharacterized protein from Escherichia coli (strain K12).